Reading from the N-terminus, the 348-residue chain is Xaa-Pro dipeptidase (348 aa).

Residues Asp209, Asp220, His284, Glu313, and Glu327 each coordinate Co(2+).

Belongs to the peptidase M24B family. Archaeal-type prolidase subfamily. In terms of assembly, homodimer. Requires Co(2+) as cofactor. The cofactor is Mn(2+).

Its subcellular location is the cytoplasm. It catalyses the reaction Xaa-L-Pro dipeptide + H2O = an L-alpha-amino acid + L-proline. Functionally, splits dipeptides with a prolyl in the C-terminal position and a nonpolar amino acid at the N-terminal position. The protein is Xaa-Pro dipeptidase (pepQ) of Pyrococcus furiosus (strain ATCC 43587 / DSM 3638 / JCM 8422 / Vc1).